The primary structure comprises 203 residues: CASP-like protein 5A2 (203 aa).

Residues 1-63 (MRASRPVVHP…KDPPGAPGTP (63 aa)) are Cytoplasmic-facing. A disordered region spans residues 39–58 (AAHGGENAQPRGVRMKDPPG). A helical membrane pass occupies residues 64 to 84 (GGLGLRLVQAFFAAAALAVMA). The Extracellular segment spans residues 85-94 (STDDFPSVSA). A helical transmembrane segment spans residues 95-115 (FCYLVAAAILQCLWSLSLAVV). At 116 to 139 (DIYALLVKRSLRNPQAVCIFTIGD) the chain is on the cytoplasmic side. A helical membrane pass occupies residues 140 to 160 (GITGTLTLGAACASAGITVLI). Topologically, residues 161–177 (GNDLNICANNHCASFET) are extracellular. A helical transmembrane segment spans residues 178–198 (ATAMAFISWFALAPSCVLNFW). Topologically, residues 199 to 203 (SMASR) are cytoplasmic.

Belongs to the Casparian strip membrane proteins (CASP) family. In terms of assembly, homodimer and heterodimers.

The protein resides in the cell membrane. This is CASP-like protein 5A2 from Oryza sativa subsp. indica (Rice).